A 1039-amino-acid chain; its full sequence is MAAAPFLKHWRTTFERVEKFVSPIYFTDCNLRGRLFGDSCSVTLSSFLTPERLPYEKAVQQNFSPAQVGDSFGPTWWTCWFRVELVIPEVWVGQEVHLCWESDGESLVWRDGEPVQGLTKEGEKTSYVLSERLRASDPRSLTLYVEVACNGLLGAGKGSMIAAPDPEKMFQLSQAKLAVFHRDVHSLLVDLELLLGVAKGLGEDSQRSFQALHTANQMVNICDPAQPETYPAAKALASKFFGQHGGESQHTIHAMGHCHIDTAWLWPFKETVRKCARSWSTAVTLMEQNTDFIFACSQAQQLEWVKSQYPGLHARLQEFACRGQFVPVGGTWVEMDGNLPSGEAMVRQFLQGQNFFLQEFGKMCSEFWLPDTFGYSAQLPQIMQGCGIKRFLTQKLSWNLVNSFPHHTFFWEGLDGSRVLVHFPPGDSYGMQGSVEEVLKTVTNNRDKGRTNHSGFLFGFGDGGGGPTQTMLDRLKRLSNTDGLPRVQLSSPGQLFTALERDSGQLCTWVGELFLELHNGTYTTHAQLKKGNRECEQILHDVEVLSSLALARSAQFLYPAAQLQHLWRLLLLNQFHDVVTGSCIQLVAEDAMNYYEDIRSHGNPLLSAAAAALCAGEPGPKGLLIINTLPWKRTEVLALPKPCGAHSLALVTVPSIGYAPAPTPTSLQPLLPQQPVFVMQETDGSVTLDNGIIRVRLDPTGCLTSLVLVASGREAIAEGALGNQFVLFDDVPLYWDAWDVMDYHLETRKPVLGQAGTLAVGTEGGLRGSAWFLLQISPNSRLSQEVVLDVGCPYVRFHTEVHWHEAHKFLKVEFPARIRSPQATYEIQFGHLQRPTHNNTSWDWARYEVWAHRWIDLSECDFGLALLNNCKYGASVRGNVLSLSLLRAPKAPDATADMGRHEFTYALMPHKGSFQEAGVIHAAYNLNFPLLALPAPGPAPDTTWSAFSVSSPAVVLETIKQAERCHQHRTLVLRLYEAHGSHVDCWLHTSLPVQEATLCDLLEQRDPTGHLSLQDNRLKLTFSPFQVRSLLLVLQSPPN.

4 residues coordinate Co(2+): histidine 259, aspartate 261, aspartate 371, and histidine 576. The active-site Nucleophile is the aspartate 371.

It belongs to the glycosyl hydrolase 38 family. Requires Co(2+) as cofactor. As to expression, expressed in kidney and liver (at protein level). Widely expressed, with highest levels in lung, ovary and testis. Also detected at lower levels in heart, brain, liver, spleen, kidney and thymus.

The protein resides in the cytoplasm. The enzyme catalyses Hydrolysis of terminal, non-reducing alpha-D-mannose residues in alpha-D-mannosides.. Its activity is regulated as follows. Inhibited by 1,4-dideoxy-1,4-imino-d-mannitol (DIM) and EDTA. In terms of biological role, cleaves alpha 1,2-, alpha 1,3-, and alpha 1,6-linked mannose residues from glycoproteins. Involved in the degradation of free oligosaccharides in the cytoplasm. The chain is Alpha-mannosidase 2C1 from Mus musculus (Mouse).